The chain runs to 66 residues: MKANEIRDLTTAEIEQKVKSLKEELFNLRFQLATGQLENTARIREVRKAIARMKTVIREREIAANK.

The protein belongs to the universal ribosomal protein uL29 family. In terms of assembly, part of the 50S ribosomal subunit.

This is Large ribosomal subunit protein uL29 (rpmC) from Bacillus subtilis (strain 168).